Here is a 307-residue protein sequence, read N- to C-terminus: Acyl transferase (307 aa).

Active-site charge relay system residues include Ser-116, Asp-213, and His-243.

Belongs to the LuxD family.

It functions in the pathway lipid metabolism; fatty acid reduction for biolumincescence. Functionally, acyl transferase is part of the fatty acid reductase system required for aldehyde biosynthesis; it produces fatty acids for the luminescent reaction. This is Acyl transferase from Photorhabdus luminescens (Xenorhabdus luminescens).